The chain runs to 583 residues: 2-succinyl-5-enolpyruvyl-6-hydroxy-3-cyclohexene-1-carboxylate synthase (583 aa).

The protein belongs to the TPP enzyme family. MenD subfamily. Homodimer. Mg(2+) serves as cofactor. It depends on Mn(2+) as a cofactor. Requires thiamine diphosphate as cofactor.

The catalysed reaction is isochorismate + 2-oxoglutarate + H(+) = 5-enolpyruvoyl-6-hydroxy-2-succinyl-cyclohex-3-ene-1-carboxylate + CO2. It participates in quinol/quinone metabolism; 1,4-dihydroxy-2-naphthoate biosynthesis; 1,4-dihydroxy-2-naphthoate from chorismate: step 2/7. The protein operates within quinol/quinone metabolism; menaquinone biosynthesis. Catalyzes the thiamine diphosphate-dependent decarboxylation of 2-oxoglutarate and the subsequent addition of the resulting succinic semialdehyde-thiamine pyrophosphate anion to isochorismate to yield 2-succinyl-5-enolpyruvyl-6-hydroxy-3-cyclohexene-1-carboxylate (SEPHCHC). The sequence is that of 2-succinyl-5-enolpyruvyl-6-hydroxy-3-cyclohexene-1-carboxylate synthase from Chlorobium limicola (strain DSM 245 / NBRC 103803 / 6330).